A 383-amino-acid polypeptide reads, in one-letter code: Smad nuclear-interacting protein 1 (383 aa).

Residues 1–10 show a composition bias toward basic and acidic residues; it reads MKAGKSERER. Positions 1-209 are disordered; sequence MKAGKSERER…NRSKEVPVKE (209 aa). Serine 18 bears the Phosphoserine mark. Residue lysine 28 forms a Glycyl lysine isopeptide (Lys-Gly) (interchain with G-Cter in SUMO); alternate linkage. Lysine 28 is covalently cross-linked (Glycyl lysine isopeptide (Lys-Gly) (interchain with G-Cter in SUMO1); alternate). Lysine 28 participates in a covalent cross-link: Glycyl lysine isopeptide (Lys-Gly) (interchain with G-Cter in SUMO2); alternate. Basic and acidic residues predominate over residues 28 to 43; that stretch reads KQERLSPEPVAHRRPD. 3 positions are modified to phosphoserine: serine 33, serine 48, and serine 50. Over residues 44–56 the composition is skewed to low complexity; that stretch reads APAASLSPPAAEP. A compositionally biased stretch (basic residues) spans 59 to 90; the sequence is SGHRGSRARSPAKKKSKSSGRRSKSPRTKRSQ. Position 91 is a phosphoserine (serine 91). Basic and acidic residues-rich tracts occupy residues 99 to 134 and 143 to 159; these read VKQE…ERDR and RSSD…DRDS. A Glycyl lysine isopeptide (Lys-Gly) (interchain with G-Cter in SUMO2) cross-link involves residue lysine 100. Serine 145 carries the phosphoserine modification. Positions 153–194 form a coiled coil; sequence QDRDRDSQNLQAQEEERDFHNARRREHRQQNESAGSEAQEVI. A Glycyl lysine isopeptide (Lys-Gly) (interchain with G-Cter in SUMO2) cross-link involves residue lysine 210. Residues 268–331 form the FHA domain; the sequence is YLLGRHRRIA…NGTFLNNKRI (64 aa). Basic and acidic residues predominate over residues 359–369; that stretch reads ESSDTSELDRK. The tract at residues 359–383 is disordered; sequence ESSDTSELDRKEDEDDEEEEMVSDS. Positions 370–383 are enriched in acidic residues; that stretch reads EDEDDEEEEMVSDS. A Phosphoserine modification is found at serine 381.

As to quaternary structure, component of activated spliceosome complexes. Binds SMAD4 and CREBBP/EP300. Component of the minor spliceosome, which splices U12-type introns. Binds the SMAD1/OAZ1/PSMB4 complex. Interacts with DROSHA and SMARCA4. Component of the SNARP complex which consists at least of SNIP1, SNW1, THRAP3, BCLAF1 and PNN. In terms of processing, degraded by the proteasome upon binding to the SMAD1/OAZ1/PSMB4 complex.

It is found in the nucleus. Required for pre-mRNA splicing as component of the spliceosome. As a component of the minor spliceosome, involved in the splicing of U12-type introns in pre-mRNAs. Down-regulates NF-kappa-B signaling by competing with RELA for CREBBP/EP300 binding. Involved in the microRNA (miRNA) biogenesis. May be involved in cyclin-D1/CCND1 mRNA stability through the SNARP complex which associates with both the 3'end of the CCND1 gene and its mRNA. This is Smad nuclear-interacting protein 1 (Snip1) from Mus musculus (Mouse).